Reading from the N-terminus, the 408-residue chain is 3-phosphoshikimate 1-carboxyvinyltransferase (408 aa).

3-phosphoshikimate contacts are provided by K20, S21, and R25. K20 contributes to the phosphoenolpyruvate binding site. R111 contacts phosphoenolpyruvate. 6 residues coordinate 3-phosphoshikimate: S151, S152, Q153, S178, D293, and K320. Q153 is a phosphoenolpyruvate binding site. D293 (proton acceptor) is an active-site residue. Residues R324, R365, and K389 each coordinate phosphoenolpyruvate.

It belongs to the EPSP synthase family. In terms of assembly, monomer.

The protein resides in the cytoplasm. The enzyme catalyses 3-phosphoshikimate + phosphoenolpyruvate = 5-O-(1-carboxyvinyl)-3-phosphoshikimate + phosphate. It participates in metabolic intermediate biosynthesis; chorismate biosynthesis. In terms of biological role, catalyzes the transfer of the enolpyruvyl moiety of phosphoenolpyruvate (PEP) to the 5-hydroxyl of shikimate-3-phosphate (S3P) to produce enolpyruvyl shikimate-3-phosphate and inorganic phosphate. The sequence is that of 3-phosphoshikimate 1-carboxyvinyltransferase from Sulfurisphaera tokodaii (strain DSM 16993 / JCM 10545 / NBRC 100140 / 7) (Sulfolobus tokodaii).